A 232-amino-acid chain; its full sequence is 5'-methylthioadenosine/S-adenosylhomocysteine nucleosidase (232 aa).

The active-site Proton acceptor is the glutamate 14. Substrate-binding positions include glycine 80, valine 154, and 175-176 (ME). Catalysis depends on aspartate 199, which acts as the Proton donor.

The protein belongs to the PNP/UDP phosphorylase family. MtnN subfamily.

The enzyme catalyses S-adenosyl-L-homocysteine + H2O = S-(5-deoxy-D-ribos-5-yl)-L-homocysteine + adenine. It catalyses the reaction S-methyl-5'-thioadenosine + H2O = 5-(methylsulfanyl)-D-ribose + adenine. It carries out the reaction 5'-deoxyadenosine + H2O = 5-deoxy-D-ribose + adenine. It participates in amino-acid biosynthesis; L-methionine biosynthesis via salvage pathway; S-methyl-5-thio-alpha-D-ribose 1-phosphate from S-methyl-5'-thioadenosine (hydrolase route): step 1/2. In terms of biological role, catalyzes the irreversible cleavage of the glycosidic bond in both 5'-methylthioadenosine (MTA) and S-adenosylhomocysteine (SAH/AdoHcy) to adenine and the corresponding thioribose, 5'-methylthioribose and S-ribosylhomocysteine, respectively. Also cleaves 5'-deoxyadenosine, a toxic by-product of radical S-adenosylmethionine (SAM) enzymes, into 5-deoxyribose and adenine. The polypeptide is 5'-methylthioadenosine/S-adenosylhomocysteine nucleosidase (Actinobacillus pleuropneumoniae serotype 5b (strain L20)).